Consider the following 42-residue polypeptide: Photosystem I reaction center subunit IX (42 aa).

The chain crosses the membrane as a helical span at residues 8 to 28; that stretch reads YLSTAPVLLTIWLSFTAALVI.

The protein belongs to the PsaJ family.

The protein resides in the plastid. It is found in the chloroplast thylakoid membrane. Functionally, may help in the organization of the PsaE and PsaF subunits. The polypeptide is Photosystem I reaction center subunit IX (Guillardia theta (Cryptophyte)).